A 561-amino-acid polypeptide reads, in one-letter code: Carbohydrate sulfotransferase 15 (561 aa).

Residues 1-80 (MRHCINCCIQ…FLRFRKGKRC (80 aa)) lie on the Cytoplasmic side of the membrane. The helical; Signal-anchor for type II membrane protein transmembrane segment at 81–101 (SLVFGLIIMTLVMASYILSGA) threads the bilayer. The Lumenal portion of the chain corresponds to 102 to 561 (HQELLISSPF…DDEAFAWKTT (460 aa)). A 3'-phosphoadenylyl sulfate-binding site is contributed by 263–267 (KCGTT). Asn364 carries an N-linked (GlcNAc...) asparagine glycan. The 3'-phosphoadenylyl sulfate site is built by Arg392 and Ser400.

Belongs to the sulfotransferase 1 family. Homodimer; disulfide-linked (Potential). The relevance of homodimerization is however unsure. May interact with phosphorylated proteins in resting B-cells, including HCK. The cofactor is a divalent metal cation. It depends on glutathione as a cofactor. Glycosylated.

Its subcellular location is the golgi apparatus membrane. It carries out the reaction dermatan 4'-sulfate + n 3'-phosphoadenylyl sulfate = dermatan 4',6'-bissulfate + n adenosine 3',5'-bisphosphate + n H(+). The enzyme catalyses chondroitin 4'-sulfate + n 3'-phosphoadenylyl sulfate = chondroitin 4',6'-bissulfate + n adenosine 3',5'-bisphosphate + n H(+). Its activity is regulated as follows. Inhibited by phenyl beta-GalNAc(4,6-SO(4)). Functionally, sulfotransferase that transfers sulfate from 3'-phosphoadenosine 5'-phosphosulfate (PAPS) to the C-6 hydroxyl group of the GalNAc 4-sulfate residue of chondroitin sulfate A and forms chondroitin sulfate E containing GlcA-GalNAc(4,6-SO(4)) repeating units. It also transfers sulfate to a unique non-reducing terminal sequence, GalNAc(4SO4)-GlcA(2SO4)-GalNAc(6SO4), to yield a highly sulfated structure similar to the structure found in thrombomodulin chondroitin sulfate. May also act as a B-cell receptor involved in BCR ligation-mediated early activation that mediate regulatory signals key to B-cell development and/or regulation of B-cell-specific RAG expression; however such results are unclear in vivo. The chain is Carbohydrate sulfotransferase 15 (Chst15) from Rattus norvegicus (Rat).